We begin with the raw amino-acid sequence, 268 residues long: Thiazole synthase (268 aa).

Lys-111 serves as the catalytic Schiff-base intermediate with DXP. 1-deoxy-D-xylulose 5-phosphate is bound by residues Gly-172, 198–199 (AG), and 220–221 (NT).

It belongs to the ThiG family. As to quaternary structure, homotetramer. Forms heterodimers with either ThiH or ThiS.

It localises to the cytoplasm. The enzyme catalyses [ThiS sulfur-carrier protein]-C-terminal-Gly-aminoethanethioate + 2-iminoacetate + 1-deoxy-D-xylulose 5-phosphate = [ThiS sulfur-carrier protein]-C-terminal Gly-Gly + 2-[(2R,5Z)-2-carboxy-4-methylthiazol-5(2H)-ylidene]ethyl phosphate + 2 H2O + H(+). Its pathway is cofactor biosynthesis; thiamine diphosphate biosynthesis. In terms of biological role, catalyzes the rearrangement of 1-deoxy-D-xylulose 5-phosphate (DXP) to produce the thiazole phosphate moiety of thiamine. Sulfur is provided by the thiocarboxylate moiety of the carrier protein ThiS. In vitro, sulfur can be provided by H(2)S. The chain is Thiazole synthase from Caulobacter sp. (strain K31).